Here is a 450-residue protein sequence, read N- to C-terminus: Glutamyl-tRNA reductase (450 aa).

Substrate-binding positions include 50-53 (TCNR), serine 109, 114-116 (EPQ), and glutamine 120. Residue cysteine 51 is the Nucleophile of the active site. 189-194 (GAGEMA) provides a ligand contact to NADP(+). The tract at residues 422–450 (NEPEQPEAHKNRKRPQPDLPAGCPGKTIL) is disordered.

This sequence belongs to the glutamyl-tRNA reductase family. As to quaternary structure, homodimer.

The catalysed reaction is (S)-4-amino-5-oxopentanoate + tRNA(Glu) + NADP(+) = L-glutamyl-tRNA(Glu) + NADPH + H(+). The protein operates within porphyrin-containing compound metabolism; protoporphyrin-IX biosynthesis; 5-aminolevulinate from L-glutamyl-tRNA(Glu): step 1/2. Catalyzes the NADPH-dependent reduction of glutamyl-tRNA(Glu) to glutamate 1-semialdehyde (GSA). The protein is Glutamyl-tRNA reductase of Oleidesulfovibrio alaskensis (strain ATCC BAA-1058 / DSM 17464 / G20) (Desulfovibrio alaskensis).